A 278-amino-acid polypeptide reads, in one-letter code: Large ribosomal subunit protein uL2 (278 aa).

The disordered stretch occupies residues 214 to 278 (WLGKRPHNRG…IMRSRHQRKS (65 aa)).

This sequence belongs to the universal ribosomal protein uL2 family. In terms of assembly, part of the 50S ribosomal subunit. Forms a bridge to the 30S subunit in the 70S ribosome.

One of the primary rRNA binding proteins. Required for association of the 30S and 50S subunits to form the 70S ribosome, for tRNA binding and peptide bond formation. It has been suggested to have peptidyltransferase activity; this is somewhat controversial. Makes several contacts with the 16S rRNA in the 70S ribosome. The chain is Large ribosomal subunit protein uL2 from Chelativorans sp. (strain BNC1).